Consider the following 497-residue polypeptide: MVSEFPGPGSRVPWRPRDEALRVNVGGVRRLLSARALARFPGTRLGRLQAAASEEQARRLCDDYDAAAHEFYFDRHPGFFLGLLHFYRTGHLHVLDELCVFAFGQEADYWGLGENALATCCRARYLERRVARPRAWDEDSDAPSSVDPCPDEISDVQRELARYGAARCGRLRRRLWLTMENPGYSLPSKLFSCVSIGVVLASIAAMCIHSLPEYQAREAAAAVAAVAAGRSAEEVRDDPVLRRLEYFCIAWFSFEVSSRLLLAPSTRNFFCHPLNLIDIVSVLPFYLTLLAGAALGDQRGASGEELGDLGKVVQVFRLMRIFRVLKLARHSTGLRSLGATLKHSYREVGILLLYLAVGVSVFSGVAYTAEEENEGFHTIPACWWWGTVSMTTVGYGDVVPETVGGKLAASGCILGGILVVALPITIIFNKFSHFYRRQKALEAAVRSSGQREFEDLLSSVDGVSDVSLETSRDTSQEGRSTDLETQAPREPAKSHSY.

Residues 1–186 (MVSEFPGPGS…LTMENPGYSL (186 aa)) lie on the Cytoplasmic side of the membrane. A helical membrane pass occupies residues 187–208 (PSKLFSCVSIGVVLASIAAMCI). Over 209-239 (HSLPEYQAREAAAAVAAVAAGRSAEEVRDDP) the chain is Extracellular. The chain crosses the membrane as a helical span at residues 240–262 (VLRRLEYFCIAWFSFEVSSRLLL). Residues 263-273 (APSTRNFFCHP) are Cytoplasmic-facing. The chain crosses the membrane as a helical span at residues 274-291 (LNLIDIVSVLPFYLTLLA). Residues 292–309 (GAALGDQRGASGEELGDL) are Extracellular-facing. A helical; Voltage-sensor transmembrane segment spans residues 310–330 (GKVVQVFRLMRIFRVLKLARH). Topologically, residues 331 to 345 (STGLRSLGATLKHSY) are cytoplasmic. Residues 346-367 (REVGILLLYLAVGVSVFSGVAY) traverse the membrane as a helical segment. Over 368 to 379 (TAEEENEGFHTI) the chain is Extracellular. An intramembrane region (helical) is located at residues 380–391 (PACWWWGTVSMT). Residues 392-397 (TVGYGD) carry the Selectivity filter motif. An intramembrane segment occupies 392–399 (TVGYGDVV). Residues 400–406 (PETVGGK) are Extracellular-facing. A helical membrane pass occupies residues 407-435 (LAASGCILGGILVVALPITIIFNKFSHFY). The Cytoplasmic segment spans residues 436–497 (RRQKALEAAV…PREPAKSHSY (62 aa)). Positions 464 to 497 (SDVSLETSRDTSQEGRSTDLETQAPREPAKSHSY) are disordered. The segment covering 470 to 482 (TSRDTSQEGRSTD) has biased composition (basic and acidic residues).

The protein belongs to the potassium channel family. S (TC 1.A.1.2) subfamily. Kv9.1/KCNS1 sub-subfamily. Heterotetramer with KCNB1 and KCNB2. Does not form homomultimers. Detected in brain, but not in the other tissues tested. The highest levels of expression are in olfactory bulb, cerebral cortex, hippocampus, habenula, basolateral amygdaloid nuclei and cerebellum.

It is found in the cell membrane. Its function is as follows. Potassium channel regulatory subunit that modulate the delayed rectifier voltage-gated potassium channel activity of KCNB1 and KCNB2 by altering their kinetics, expression levels, and shifting the half-inactivation potential to more polarized values. While it does not form functional channels on its own, it can form functional heterotetrameric channels with KCNB1 and KCNB2. Each regulatory subunit has unique regulatory properties that can lead to extensive inhibition, significant changes in kinetics, and/or substantial shifts in the voltage dependencies of the inactivation process. This Mus musculus (Mouse) protein is Delayed-rectifier potassium channel regulatory subunit KCNS1.